Reading from the N-terminus, the 104-residue chain is DNA-directed RNA polymerase subunit Rpo13 (104 aa).

Disordered stretches follow at residues 1–33 (MVSG…EDEF) and 78–104 (RDSR…SVEG). Residues 7–31 (TDEEKEGTSDEEVNEEKEVEETSED) show a composition bias toward acidic residues. Over residues 80–104 (SRRKAKKAVSKKVKKTKKKEKSVEG) the composition is skewed to basic residues.

Belongs to the archaeal Rpo13 RNA polymerase subunit family. In terms of assembly, part of the 13-subunit RNA polymerase complex.

The protein resides in the cytoplasm. The enzyme catalyses RNA(n) + a ribonucleoside 5'-triphosphate = RNA(n+1) + diphosphate. In terms of biological role, DNA-dependent RNA polymerase (RNAP) catalyzes the transcription of DNA into RNA using the four ribonucleoside triphosphates as substrates. Probably binds dsDNA. This is DNA-directed RNA polymerase subunit Rpo13 from Saccharolobus solfataricus (strain ATCC 35092 / DSM 1617 / JCM 11322 / P2) (Sulfolobus solfataricus).